Reading from the N-terminus, the 180-residue chain is ATP-dependent protease subunit HslV (180 aa).

Residue Thr-9 is part of the active site. Na(+) is bound by residues Ala-164, Cys-167, and Thr-170.

Belongs to the peptidase T1B family. HslV subfamily. As to quaternary structure, a double ring-shaped homohexamer of HslV is capped on each side by a ring-shaped HslU homohexamer. The assembly of the HslU/HslV complex is dependent on binding of ATP.

The protein resides in the cytoplasm. The enzyme catalyses ATP-dependent cleavage of peptide bonds with broad specificity.. Its activity is regulated as follows. Allosterically activated by HslU binding. Functionally, protease subunit of a proteasome-like degradation complex believed to be a general protein degrading machinery. This Leptospira interrogans serogroup Icterohaemorrhagiae serovar Lai (strain 56601) protein is ATP-dependent protease subunit HslV.